The primary structure comprises 424 residues: PDZ and LIM domain protein 7 (424 aa).

One can recognise a PDZ domain in the interval 1 to 85 (MDSFKVVLEG…RLSLSLSRAQ (85 aa)). Phosphoserine is present on Ser-78. Polar residues predominate over residues 81–98 (LSRAQPAQSKPQKVQTPD). Positions 81–221 (LSRAQPAQSK…HTQPATPTPM (141 aa)) are disordered. A Phosphothreonine modification is found at Thr-96. Residues 110-123 (SKQRLMEDTEDWRP) are compositionally biased toward basic and acidic residues. Over residues 174-187 (EPWPGPTTPSPTSR) the composition is skewed to pro residues. Polar residues predominate over residues 204 to 221 (KTSTVLTRHTQPATPTPM). LIM zinc-binding domains lie at 247–305 (PVCH…VRYA), 306–365 (PSCA…MFGT), and 366–424 (KCRG…FSHV).

Binds via its LIM zinc-binding 3 domain (LIM 3) domain to endocytic codes of INSR, but not with those of IGF1R, LDLR, TFRC, or EGFR. Interacts with various PKC isoforms through the LIM zinc-binding domains. Binds to RET in a phosphorylation-independent manner via its LIM zinc-binding 2 domain (LIM 2). Probably part of a complex with SHC and the RET dimer. Interacts with TPM2, TBX4 and TBX5.

It localises to the cytoplasm. The protein resides in the cytoskeleton. May function as a scaffold on which the coordinated assembly of proteins can occur. May play a role as an adapter that, via its PDZ domain, localizes LIM-binding proteins to actin filaments of both skeletal muscle and nonmuscle tissues. Involved in both of the two fundamental mechanisms of bone formation, direct bone formation (e.g. embryonic flat bones mandible and cranium), and endochondral bone formation (e.g. embryonic long bone development). Plays a role during fracture repair. Involved in BMP6 signaling pathway. The polypeptide is PDZ and LIM domain protein 7 (PDLIM7) (Bos taurus (Bovine)).